We begin with the raw amino-acid sequence, 559 residues long: Cytoplasmic polyadenylation element-binding protein 1 (559 aa).

Positions 223–244 are disordered; sequence RLDHSSSPLTPPPSATSSGGLS. RRM domains lie at 304–401 and 423–504; these read CKVF…DAQV and NTVF…PYLE. Residues C508, C511, C520, C525, C530, C533, H538, and H546 each coordinate Zn(2+).

Belongs to the RRM CPEB family. In terms of assembly, interacts with kinesin, dynein, APLP1, APLP2, TENT2/GLD2 and APP. Both phosphorylated and non phosphorylated forms interact with APLP1. Interacts with TENT4B; the interaction is required for TENT4B-mediated translational control.

It is found in the cytoplasm. Functionally, sequence-specific RNA-binding protein that regulates mRNA cytoplasmic polyadenylation and translation initiation during oocyte maturation and early development. Binds to the cytoplasmic polyadenylation element (CPE), an uridine-rich sequence element (consensus sequence 5'-UUUUUAU-3') within the mRNA 3'-UTR. The polypeptide is Cytoplasmic polyadenylation element-binding protein 1 (cpeb1) (Carassius auratus (Goldfish)).